The sequence spans 37 residues: Large ribosomal subunit protein bL36 (37 aa).

The protein belongs to the bacterial ribosomal protein bL36 family.

This chain is Large ribosomal subunit protein bL36, found in Chromobacterium violaceum (strain ATCC 12472 / DSM 30191 / JCM 1249 / CCUG 213 / NBRC 12614 / NCIMB 9131 / NCTC 9757 / MK).